The sequence spans 311 residues: MIDLLIIAGPTAVGKTDISIKLAEKLNGEIISADSMQIYKYMDIGSAKITKDEMKGIPHHLIDVVEPHEEFNVSSFKALAEKSIKDIWNRGKLPIIAGGTGLYINSLIYNYDFTDADRDEKYREYLTKLAEDKGKEYVHSLLKDIDKESYEKLYPNDLKRVVRALEVYKITGKSISEYTKENEKKLYDIPYNVNYFILNMNREVLYERINKRVDIMMGKGLIEEVKKLESMGYTPDMQSMKGIGYKEVLFYLNGDISLDEAIYLIKKGSRNYAKRQLTWFRKDKRSIWIDKDKYRSEEEIVDKIIKMVKDK.

9 to 16 contributes to the ATP binding site; sequence GPTAVGKT. 11–16 provides a ligand contact to substrate; that stretch reads TAVGKT. An interaction with substrate tRNA region spans residues 34 to 37; sequence DSMQ.

The protein belongs to the IPP transferase family. As to quaternary structure, monomer. It depends on Mg(2+) as a cofactor.

The catalysed reaction is adenosine(37) in tRNA + dimethylallyl diphosphate = N(6)-dimethylallyladenosine(37) in tRNA + diphosphate. Functionally, catalyzes the transfer of a dimethylallyl group onto the adenine at position 37 in tRNAs that read codons beginning with uridine, leading to the formation of N6-(dimethylallyl)adenosine (i(6)A). The polypeptide is tRNA dimethylallyltransferase (Clostridium botulinum (strain Hall / ATCC 3502 / NCTC 13319 / Type A)).